We begin with the raw amino-acid sequence, 382 residues long: Lipid-A-disaccharide synthase (382 aa).

Belongs to the LpxB family.

It carries out the reaction 2-N,3-O-bis[(3R)-3-hydroxytetradecanoyl]-alpha-D-glucosaminyl 1-phosphate + UDP-2-N,3-O-bis[(3R)-3-hydroxytetradecanoyl]-alpha-D-glucosamine = lipid A disaccharide (E. coli) + UDP + H(+). The enzyme catalyses a lipid X + a UDP-2-N,3-O-bis[(3R)-3-hydroxyacyl]-alpha-D-glucosamine = a lipid A disaccharide + UDP + H(+). It functions in the pathway glycolipid biosynthesis; lipid IV(A) biosynthesis; lipid IV(A) from (3R)-3-hydroxytetradecanoyl-[acyl-carrier-protein] and UDP-N-acetyl-alpha-D-glucosamine: step 5/6. Functionally, condensation of UDP-2,3-diacylglucosamine and 2,3-diacylglucosamine-1-phosphate to form lipid A disaccharide, a precursor of lipid A, a phosphorylated glycolipid that anchors the lipopolysaccharide to the outer membrane of the cell. In Escherichia fergusonii (strain ATCC 35469 / DSM 13698 / CCUG 18766 / IAM 14443 / JCM 21226 / LMG 7866 / NBRC 102419 / NCTC 12128 / CDC 0568-73), this protein is Lipid-A-disaccharide synthase.